Consider the following 100-residue polypeptide: Small ribosomal subunit protein uS14c (100 aa).

Belongs to the universal ribosomal protein uS14 family. Part of the 30S ribosomal subunit.

It is found in the plastid. The protein resides in the chloroplast. Functionally, binds 16S rRNA, required for the assembly of 30S particles. This Zygnema circumcarinatum (Green alga) protein is Small ribosomal subunit protein uS14c.